Reading from the N-terminus, the 137-residue chain is Large-conductance mechanosensitive channel (137 aa).

A run of 2 helical transmembrane segments spans residues 10–30 (FAMRGNVVDLAVGVIIGAAFG) and 76–96 (GVFIQNVFDFVIVAFAIFVAI).

Belongs to the MscL family. Homopentamer.

The protein localises to the cell inner membrane. Channel that opens in response to stretch forces in the membrane lipid bilayer. May participate in the regulation of osmotic pressure changes within the cell. This Salmonella choleraesuis (strain SC-B67) protein is Large-conductance mechanosensitive channel.